We begin with the raw amino-acid sequence, 312 residues long: MERSLALANMTRVQQFILLGLSTRLDIRDALFAVFLTLYLLTLLENTLIIYLICSHKELHKPMYFFLGNLSCLEMCYVSVTMPTLLMGLWNGLYHIPFIACMTQLFFFIVLVGTECILLASMAYDRYVAICRPLHYPVLMRPQVCLGLAMISWLGGLLVSMIKTTCIATLSYCGPNVLNHFFCDVSPLLNLSCTHVALTELVDFISAIVILWGCFLTTMASYVAIGRAVLRMPSTTARYKAFSTCASHLVVVGIFYSVTIFIYARPKRIEAMDLNKVLSVIYTVVTPMCNPVIYCLRNKEVQVALHRTMHWS.

At 1-29 the chain is on the extracellular side; that stretch reads MERSLALANMTRVQQFILLGLSTRLDIRD. Residue Asn9 is glycosylated (N-linked (GlcNAc...) asparagine). Residues 30–50 form a helical membrane-spanning segment; sequence ALFAVFLTLYLLTLLENTLII. Residues 51-69 lie on the Cytoplasmic side of the membrane; sequence YLICSHKELHKPMYFFLGN. A helical transmembrane segment spans residues 70–90; sequence LSCLEMCYVSVTMPTLLMGLW. Asn91 is a topological domain (extracellular). The chain crosses the membrane as a helical span at residues 92-112; sequence GLYHIPFIACMTQLFFFIVLV. Residues Cys101 and Cys193 are joined by a disulfide bond. Topologically, residues 113–141 are cytoplasmic; it reads GTECILLASMAYDRYVAICRPLHYPVLMR. Residues 142 to 162 form a helical membrane-spanning segment; that stretch reads PQVCLGLAMISWLGGLLVSMI. Topologically, residues 163–195 are extracellular; it reads KTTCIATLSYCGPNVLNHFFCDVSPLLNLSCTH. An N-linked (GlcNAc...) asparagine glycan is attached at Asn190. Residues 196–216 traverse the membrane as a helical segment; that stretch reads VALTELVDFISAIVILWGCFL. The Cytoplasmic segment spans residues 217-241; the sequence is TTMASYVAIGRAVLRMPSTTARYKA. The helical transmembrane segment at 242–262 threads the bilayer; it reads FSTCASHLVVVGIFYSVTIFI. Topologically, residues 263–275 are extracellular; the sequence is YARPKRIEAMDLN. A helical membrane pass occupies residues 276–296; that stretch reads KVLSVIYTVVTPMCNPVIYCL. Residues 297 to 312 lie on the Cytoplasmic side of the membrane; it reads RNKEVQVALHRTMHWS.

This sequence belongs to the G-protein coupled receptor 1 family.

Its subcellular location is the cell membrane. Its function is as follows. Odorant receptor. This Mus musculus (Mouse) protein is Olfactory receptor 6Z7.